We begin with the raw amino-acid sequence, 493 residues long: Cytochrome P450 710A3 (493 aa).

The chain crosses the membrane as a helical span at residues 5–25 (VSLFASLTPYLVSALLLFLLL). A heme-binding site is contributed by Cys-435.

This sequence belongs to the cytochrome P450 family. Heme serves as cofactor. As to expression, expressed in stems. Detected in primary root caps and immature petals.

The protein resides in the membrane. The enzyme catalyses 5-dehydroepisterol + NADPH + O2 + H(+) = ergosta-5,7,22,24(28)-tetraen-3beta-ol + NADP(+) + 2 H2O. In terms of biological role, required to form the C-22 double bond in the sterol side chain. Possesses in vitro C-22 desaturase activity toward beta-sitosterol and produces stigmasterol. The sequence is that of Cytochrome P450 710A3 from Arabidopsis thaliana (Mouse-ear cress).